A 562-amino-acid polypeptide reads, in one-letter code: Dihydroxy-acid dehydratase 1 (562 aa).

Asp-80 serves as a coordination point for Mg(2+). Cys-121 contributes to the [2Fe-2S] cluster binding site. Positions 122 and 123 each coordinate Mg(2+). Lys-123 carries the N6-carboxylysine modification. Cys-194 serves as a coordination point for [2Fe-2S] cluster. Glu-446 provides a ligand contact to Mg(2+). Catalysis depends on Ser-472, which acts as the Proton acceptor.

The protein belongs to the IlvD/Edd family. In terms of assembly, homodimer. The cofactor is [2Fe-2S] cluster. It depends on Mg(2+) as a cofactor.

It carries out the reaction (2R)-2,3-dihydroxy-3-methylbutanoate = 3-methyl-2-oxobutanoate + H2O. The enzyme catalyses (2R,3R)-2,3-dihydroxy-3-methylpentanoate = (S)-3-methyl-2-oxopentanoate + H2O. It participates in amino-acid biosynthesis; L-isoleucine biosynthesis; L-isoleucine from 2-oxobutanoate: step 3/4. It functions in the pathway amino-acid biosynthesis; L-valine biosynthesis; L-valine from pyruvate: step 3/4. Functions in the biosynthesis of branched-chain amino acids. Catalyzes the dehydration of (2R,3R)-2,3-dihydroxy-3-methylpentanoate (2,3-dihydroxy-3-methylvalerate) into 2-oxo-3-methylpentanoate (2-oxo-3-methylvalerate) and of (2R)-2,3-dihydroxy-3-methylbutanoate (2,3-dihydroxyisovalerate) into 2-oxo-3-methylbutanoate (2-oxoisovalerate), the penultimate precursor to L-isoleucine and L-valine, respectively. The chain is Dihydroxy-acid dehydratase 1 from Staphylococcus saprophyticus subsp. saprophyticus (strain ATCC 15305 / DSM 20229 / NCIMB 8711 / NCTC 7292 / S-41).